A 182-amino-acid chain; its full sequence is R-phycoerythrin subunit beta (182 aa).

Cysteine 82 contacts (2R,3E)-phycoerythrobilin.

It belongs to the phycobiliprotein family. In terms of assembly, homodimer. Contains one covalently linked phycoerythrobilin chromophore.

Its function is as follows. Green-light absorbing phycoerythrin of unknown function. The chain is R-phycoerythrin subunit beta (cpeB) from Prochlorococcus marinus (strain SARG / CCMP1375 / SS120).